The following is a 105-amino-acid chain: Ig lambda chain C region (105 aa).

In terms of domain architecture, Ig-like spans 6 to 100 (PSVILFPPSS…EGHTVEKSLA (95 aa)). Cysteines 27 and 86 form a disulfide.

The protein is Ig lambda chain C region of Oryctolagus cuniculus (Rabbit).